The primary structure comprises 208 residues: Ribosomal RNA small subunit methyltransferase G (208 aa).

S-adenosyl-L-methionine is bound by residues glycine 76, leucine 81, 127 to 128, and arginine 142; that span reads VE.

It belongs to the methyltransferase superfamily. RNA methyltransferase RsmG family.

The protein resides in the cytoplasm. It catalyses the reaction guanosine(527) in 16S rRNA + S-adenosyl-L-methionine = N(7)-methylguanosine(527) in 16S rRNA + S-adenosyl-L-homocysteine. In terms of biological role, specifically methylates the N7 position of guanine in position 527 of 16S rRNA. The chain is Ribosomal RNA small subunit methyltransferase G from Legionella pneumophila subsp. pneumophila (strain Philadelphia 1 / ATCC 33152 / DSM 7513).